The following is a 112-amino-acid chain: UPF0060 membrane protein XOO1694 (112 aa).

The next 4 helical transmembrane spans lie at 8 to 28 (LLLFAATALAELVGCYLPYLW), 32 to 52 (GGSVWLLLPTALRLASFVWLL), 62 to 82 (VYAAYGGVYIASALGLWLWWV), and 92 to 112 (LLGAVCCLFGMAIIMFAPRSA).

It belongs to the UPF0060 family.

The protein localises to the cell inner membrane. The protein is UPF0060 membrane protein XOO1694 of Xanthomonas oryzae pv. oryzae (strain MAFF 311018).